The following is a 451-amino-acid chain: Cobalamin reductase PduS (451 aa).

2 4Fe-4S ferredoxin-type domains span residues Thr255–Ser284 and Pro300–Asn330. 8 residues coordinate [4Fe-4S] cluster: Cys264, Cys267, Cys270, Cys274, Cys309, Cys312, Cys315, and Cys320.

Belongs to the PduS cobalamin reductase family. As to quaternary structure, monomeric when purified anaerobically, dimeric under aerobic conditions. Forms a complex with PduO. Interacts with PduT, probably via the N-terminus of PduS. Requires [4Fe-4S] cluster as cofactor. It depends on FMN as a cofactor.

The protein localises to the bacterial microcompartment. The protein operates within polyol metabolism; 1,2-propanediol degradation. A protein that aids in conversion of cob(III)alamin to cob(II)alamin and then to cob(I)alamin in the bacterial microcompartment (BMC) dedicated to 1,2-propanediol (1,2-PD) degradation. The latter step requires PduO. No free cob(I)alamin is released, suggesting a complex is formed with PduO that finishes conversion to adenosylcobalamin. PduS and PduO allow regeneration of the adenosylcobalamin cofactor within the BMC. Another study showed reduction of cob(II)alamin to cob(I)alamin in the absence of PduO. Both reactions require NADH. Cyanocobalamin (CN-Cbl) is not a substrate for the first reaction. Cobalamin reduction probably occurs spontaneously in the presence of free reduced flavin nucleotides, this protein may be involved in electron transfer for this reduction. Functionally, the 1,2-PD-specific bacterial microcompartment (BMC) concentrates low levels of 1,2-PD catabolic enzymes, concentrates volatile reaction intermediates thus enhancing pathway flux and keeps the level of toxic, mutagenic propionaldehyde low. This is Cobalamin reductase PduS from Salmonella typhimurium (strain LT2 / SGSC1412 / ATCC 700720).